The chain runs to 131 residues: Small ribosomal subunit protein uS8 (131 aa).

This sequence belongs to the universal ribosomal protein uS8 family. Part of the 30S ribosomal subunit. Contacts proteins S5 and S12.

One of the primary rRNA binding proteins, it binds directly to 16S rRNA central domain where it helps coordinate assembly of the platform of the 30S subunit. This is Small ribosomal subunit protein uS8 from Janthinobacterium sp. (strain Marseille) (Minibacterium massiliensis).